Reading from the N-terminus, the 210-residue chain is Thymidylate kinase (210 aa).

10 to 17 (GLEGAGKS) provides a ligand contact to ATP.

It belongs to the thymidylate kinase family.

The enzyme catalyses dTMP + ATP = dTDP + ADP. Its function is as follows. Phosphorylation of dTMP to form dTDP in both de novo and salvage pathways of dTTP synthesis. The polypeptide is Thymidylate kinase (Hamiltonella defensa subsp. Acyrthosiphon pisum (strain 5AT)).